The primary structure comprises 102 residues: ATP-dependent Clp protease adapter protein ClpS (102 aa).

The protein belongs to the ClpS family. Binds to the N-terminal domain of the chaperone ClpA.

Involved in the modulation of the specificity of the ClpAP-mediated ATP-dependent protein degradation. The protein is ATP-dependent Clp protease adapter protein ClpS of Shewanella piezotolerans (strain WP3 / JCM 13877).